The sequence spans 162 residues: NADH-quinone oxidoreductase subunit C (162 aa).

Belongs to the complex I 30 kDa subunit family. As to quaternary structure, NDH-1 is composed of 14 different subunits. Subunits NuoB, C, D, E, F, and G constitute the peripheral sector of the complex.

The protein localises to the cell inner membrane. The enzyme catalyses a quinone + NADH + 5 H(+)(in) = a quinol + NAD(+) + 4 H(+)(out). Its function is as follows. NDH-1 shuttles electrons from NADH, via FMN and iron-sulfur (Fe-S) centers, to quinones in the respiratory chain. The immediate electron acceptor for the enzyme in this species is believed to be ubiquinone. Couples the redox reaction to proton translocation (for every two electrons transferred, four hydrogen ions are translocated across the cytoplasmic membrane), and thus conserves the redox energy in a proton gradient. The sequence is that of NADH-quinone oxidoreductase subunit C from Geobacter metallireducens (strain ATCC 53774 / DSM 7210 / GS-15).